The chain runs to 270 residues: 4-hydroxy-tetrahydrodipicolinate reductase (270 aa).

NAD(+)-binding positions include 11–16 (GCQGRM) and E37. R38 is a binding site for NADP(+). Residues 101–103 (GTT) and 125–128 (ASNF) contribute to the NAD(+) site. The Proton donor/acceptor role is filled by H158. H159 is a binding site for (S)-2,3,4,5-tetrahydrodipicolinate. The Proton donor role is filled by K162. A (S)-2,3,4,5-tetrahydrodipicolinate-binding site is contributed by 168-169 (GT).

The protein belongs to the DapB family.

The protein localises to the cytoplasm. It catalyses the reaction (S)-2,3,4,5-tetrahydrodipicolinate + NAD(+) + H2O = (2S,4S)-4-hydroxy-2,3,4,5-tetrahydrodipicolinate + NADH + H(+). It carries out the reaction (S)-2,3,4,5-tetrahydrodipicolinate + NADP(+) + H2O = (2S,4S)-4-hydroxy-2,3,4,5-tetrahydrodipicolinate + NADPH + H(+). The protein operates within amino-acid biosynthesis; L-lysine biosynthesis via DAP pathway; (S)-tetrahydrodipicolinate from L-aspartate: step 4/4. Its function is as follows. Catalyzes the conversion of 4-hydroxy-tetrahydrodipicolinate (HTPA) to tetrahydrodipicolinate. In Tolumonas auensis (strain DSM 9187 / NBRC 110442 / TA 4), this protein is 4-hydroxy-tetrahydrodipicolinate reductase.